Reading from the N-terminus, the 639-residue chain is Phosphomethylpyrimidine synthase (639 aa).

A disordered region spans residues 49 to 71; sequence DTPTDFGGEQNRPVRVYDTSGPY. Residues N231, M260, Y289, H325, 345 to 347, 386 to 389, and E425 contribute to the substrate site; these read SRG and DGLR. A Zn(2+)-binding site is contributed by H429. Y452 is a binding site for substrate. Position 493 (H493) interacts with Zn(2+). [4Fe-4S] cluster contacts are provided by C573, C576, and C581.

The protein belongs to the ThiC family. Homodimer. It depends on [4Fe-4S] cluster as a cofactor.

It catalyses the reaction 5-amino-1-(5-phospho-beta-D-ribosyl)imidazole + S-adenosyl-L-methionine = 4-amino-2-methyl-5-(phosphooxymethyl)pyrimidine + CO + 5'-deoxyadenosine + formate + L-methionine + 3 H(+). The protein operates within cofactor biosynthesis; thiamine diphosphate biosynthesis. Catalyzes the synthesis of the hydroxymethylpyrimidine phosphate (HMP-P) moiety of thiamine from aminoimidazole ribotide (AIR) in a radical S-adenosyl-L-methionine (SAM)-dependent reaction. In Teredinibacter turnerae (strain ATCC 39867 / T7901), this protein is Phosphomethylpyrimidine synthase.